Here is a 590-residue protein sequence, read N- to C-terminus: Dystrobrevin-1 (590 aa).

Positions 1–10 (MLWSNGGGGP) are enriched in gly residues. The interval 1 to 25 (MLWSNGGGGPREPSSAPSPDHHRAM) is disordered. A ZZ-type zinc finger spans residues 259–315 (YHPVVCDACQVRSFTGFRYKCQRCANYQLCQSCFWRGRTSQNHSNEHEMKEYSSYKS). Zn(2+) contacts are provided by C264, C267, C279, C282, C288, C291, H301, and H305. Residues 434-508 (SMVGDERTLI…EHLMAQLNTG (75 aa)) are a coiled coil. The tract at residues 468-590 (DGLAGLRDRK…DENGVTINGF (123 aa)) is essential for interaction with ctn-1. Residues 484–490 (MFEMQQR) form an essential for interaction with dys-1 region.

This sequence belongs to the dystrophin family. Dystrobrevin subfamily. As to quaternary structure, component of the dystrophin glycoprotein complex (DGC). Interacts with dystrophin (dys-1) and syntrophin (stn-1) to form the DGC. Interacts (via C-terminus) with ctn-1 (via N-terminus); the interaction is required for localization of the dystrophin complex and ctn-1 near dense bodies in muscle cells. As to expression, from late embryogenesis to adulthood, expressed in neurons and muscles; particularly strong in the ventral nerve cord and in muscles of the body wall, head pharyngeal, and vulva; weaker in the intestinal muscle (at protein level).

The protein resides in the cytoplasm. Plays a role in cholinergic transmission and as a functional partner of dystrophin (dys-1), necessary for muscle maintenance. Required for localization of ctn-1 near dense bodies in muscle cells. The sequence is that of Dystrobrevin-1 from Caenorhabditis elegans.